We begin with the raw amino-acid sequence, 115 residues long: Probable non-functional immunoglobulin heavy variable 8-51-1 (115 aa).

Positions M1–G17 are cleaved as a signal peptide. Residues E18–S42 are framework-1. The 97-residue stretch at A19–G115 folds into the Ig-like domain. Residues W43 to E50 are complementarity-determining-1. Positions I51 to V67 are framework-2. C55 and C113 are joined by a disulfide. The segment at I68–Q75 is complementarity-determining-2. Positions Y76 to C113 are framework-3. The complementarity-determining-3 stretch occupies residues A114–G115.

As to quaternary structure, immunoglobulins are composed of two identical heavy chains and two identical light chains; disulfide-linked.

It is found in the secreted. The protein localises to the cell membrane. Probable non-functional open reading frame (ORF) of V region of the variable domain of immunoglobulin heavy chains. Non-functional ORF generally cannot participate in the synthesis of a productive immunoglobulin chain due to altered V-(D)-J or switch recombination and/or splicing site (at mRNA level) and/or conserved amino acid change (protein level). Immunoglobulins, also known as antibodies, are membrane-bound or secreted glycoproteins produced by B lymphocytes. In the recognition phase of humoral immunity, the membrane-bound immunoglobulins serve as receptors which, upon binding of a specific antigen, trigger the clonal expansion and differentiation of B lymphocytes into immunoglobulins-secreting plasma cells. Secreted immunoglobulins mediate the effector phase of humoral immunity, which results in the elimination of bound antigens. The antigen binding site is formed by the variable domain of one heavy chain, together with that of its associated light chain. Thus, each immunoglobulin has two antigen binding sites with remarkable affinity for a particular antigen. The variable domains are assembled by a process called V-(D)-J rearrangement and can then be subjected to somatic hypermutations which, after exposure to antigen and selection, allow affinity maturation for a particular antigen. The polypeptide is Probable non-functional immunoglobulin heavy variable 8-51-1 (Homo sapiens (Human)).